Consider the following 371-residue polypeptide: Pyruvate dehydrogenase E1 component subunit alpha (371 aa).

Heterodimer of an alpha and a beta chain. It depends on thiamine diphosphate as a cofactor.

It carries out the reaction N(6)-[(R)-lipoyl]-L-lysyl-[protein] + pyruvate + H(+) = N(6)-[(R)-S(8)-acetyldihydrolipoyl]-L-lysyl-[protein] + CO2. Functionally, the pyruvate dehydrogenase complex catalyzes the overall conversion of pyruvate to acetyl-CoA and CO(2). It contains multiple copies of three enzymatic components: pyruvate dehydrogenase (E1), dihydrolipoamide acetyltransferase (E2) and lipoamide dehydrogenase (E3). This chain is Pyruvate dehydrogenase E1 component subunit alpha, found in Bacillus cereus.